The following is a 101-amino-acid chain: Small ribosomal subunit protein uS14 (101 aa).

The protein belongs to the universal ribosomal protein uS14 family. Part of the 30S ribosomal subunit. Contacts proteins S3 and S10.

Functionally, binds 16S rRNA, required for the assembly of 30S particles and may also be responsible for determining the conformation of the 16S rRNA at the A site. The chain is Small ribosomal subunit protein uS14 from Pseudomonas aeruginosa (strain LESB58).